The primary structure comprises 556 residues: Glutamine--tRNA ligase (556 aa).

Residues 34–44 (PEPNGYLHIGH) carry the 'HIGH' region motif. Residues 35-37 (EPN) and 41-47 (HIGHAKS) each bind ATP. Positions 67 and 212 each coordinate L-glutamine. ATP-binding positions include Thr-231, 261-262 (RL), and 269-271 (MSK). The 'KMSKS' region signature appears at 268–272 (VMSKR).

It belongs to the class-I aminoacyl-tRNA synthetase family. As to quaternary structure, monomer.

It localises to the cytoplasm. The catalysed reaction is tRNA(Gln) + L-glutamine + ATP = L-glutaminyl-tRNA(Gln) + AMP + diphosphate. This is Glutamine--tRNA ligase from Vibrio cholerae serotype O1 (strain ATCC 39315 / El Tor Inaba N16961).